The primary structure comprises 91 residues: Protein translocase subunit SecG (91 aa).

The next 2 helical transmembrane spans lie at 16-36 and 71-91; these read HTFLIVLLIIDCIALITVVLL and LTIILSILFFVLMICISYLGM.

It belongs to the SecG family. In terms of assembly, component of the Sec protein translocase complex. Heterotrimer consisting of SecY, SecE and SecG subunits. The heterotrimers can form oligomers, although 1 heterotrimer is thought to be able to translocate proteins. Interacts with SecDF, and other proteins may be involved. The channel interacts with SecA via subunit SecY. Also part of the accessory SecA2/SecY2 protein translocation apparatus required to export cell wall protein GspB.

The protein resides in the cell membrane. Functionally, subunit of the protein translocation channel SecYEG. While not essential, it considerably increases the export efficiency of extracellular proteins. The chain is Protein translocase subunit SecG from Staphylococcus aureus (strain NCTC 8325 / PS 47).